A 297-amino-acid chain; its full sequence is Homoserine kinase (297 aa).

84–94 (PLSKGFGSSAA) is a binding site for ATP.

It belongs to the GHMP kinase family. Homoserine kinase subfamily.

It localises to the cytoplasm. It carries out the reaction L-homoserine + ATP = O-phospho-L-homoserine + ADP + H(+). It functions in the pathway amino-acid biosynthesis; L-threonine biosynthesis; L-threonine from L-aspartate: step 4/5. Catalyzes the ATP-dependent phosphorylation of L-homoserine to L-homoserine phosphate. This chain is Homoserine kinase, found in Shouchella clausii (strain KSM-K16) (Alkalihalobacillus clausii).